The primary structure comprises 380 residues: Endonuclease III homolog 2 (380 aa).

Residues 8–12 (RKRKH) carry the Nuclear localization signal motif. The interval 15-40 (VDIEEVEVRSKYFKKNERTVELVKEN) is interaction with MLH1. K194 participates in a covalent cross-link: Glycyl lysine isopeptide (Lys-Gly) (interchain with G-Cter in SUMO). The region spanning 228 to 252 (FDSDIPYDIEGILSLPGVGPKMGYL) is the HhH domain. K248 (nucleophile; for N-glycosylase activity) is an active-site residue. 4 residues coordinate [4Fe-4S] cluster: C319, C326, C329, and C335. The Nuclear localization signal signature appears at 376–380 (RHKKK).

This sequence belongs to the Nth/MutY family. As to quaternary structure, interacts with MLH1. [4Fe-4S] cluster is required as a cofactor. Monosumoylated.

The protein resides in the nucleus. The enzyme catalyses 2'-deoxyribonucleotide-(2'-deoxyribose 5'-phosphate)-2'-deoxyribonucleotide-DNA = a 3'-end 2'-deoxyribonucleotide-(2,3-dehydro-2,3-deoxyribose 5'-phosphate)-DNA + a 5'-end 5'-phospho-2'-deoxyribonucleoside-DNA + H(+). Functionally, bifunctional DNA N-glycosylase with associated apurinic/apyrimidinic (AP) lyase function that catalyzes the first step in base excision repair (BER), the primary repair pathway for the repair of oxidative DNA damage. The DNA N-glycosylase activity releases the damaged DNA base from DNA by cleaving the N-glycosidic bond, leaving an AP site. The AP-lyase activity cleaves the phosphodiester bond 3' to the AP site by a beta-elimination. Primarily recognizes and repairs oxidative base damage of pyrimidines, but also purine-derived lesions, alkylation damage as well as abasic sites. Can also repair the oxidation products of 8-oxoguanine. The polypeptide is Endonuclease III homolog 2 (NTG2) (Saccharomyces cerevisiae (strain ATCC 204508 / S288c) (Baker's yeast)).